The sequence spans 459 residues: MRERGPVTPAKSSAPPERPWTTGTAPGSVPLLGHTMALWRRPLQFLASLPAHGDLVEVRLGPSRAYLACHPELVRQVLLNPRVFDKGGVFDKARQLLGNSLSVSRGEDHRYQRRMIQPAFHTPKIAAYTAAVADDTRAAIGSWEPGRTLDISDTMHALLMRVAARTLFSTGIDEATIDEARHCLRIVSDGIYKRTMAPLGIMEKLPTPGNRRYDRANARLRQIVDEMIRERRRSGADHGDLLSTLLRAEHPETGKGLDDGEVLDQVVTFLVAGSETTASTLAFVFHLLGAHPEVEKRVHAEIDEILEGRSPTFEDLPSLEYTRGVITESLRLYPPSWMAMRVTAAETELGGRTVPAGTMILYSAQALHHNPELFPDPERFDPERWLGDRAKEVERGALLPFGAGSHKCIGDVLALTETALIVATIASRWRLRPVPGTTLRPEPKATLEPGPLPMVCEPR.

Positions 1–27 are disordered; sequence MRERGPVTPAKSSAPPERPWTTGTAPG. Cys-408 serves as a coordination point for heme.

This sequence belongs to the cytochrome P450 family. Heme is required as a cofactor.

It carries out the reaction cyclooctat-9-en-7-ol + AH2 + O2 = cyclooctat-9-ene-5,7-diol + A + H2O. Its function is as follows. Involved in the biosynthesis of cyclooctatin, a potent inhibitor of lysophospholipase. Catalyzes the stereospecific hydroxylation of cyclooctat-9-en-7-ol to form cyclooctat-9-ene-5,7-diol. The protein is Cyclooctat-9-en-7-ol 5-monooxygenase of Streptomyces melanosporofaciens.